We begin with the raw amino-acid sequence, 279 residues long: CDP-paratose synthase (279 aa).

Catalysis depends on Tyr-115, which acts as the Proton acceptor.

The protein belongs to the NAD(P)-dependent epimerase/dehydratase family.

The catalysed reaction is CDP-alpha-D-paratose + NADP(+) = CDP-4-dehydro-3,6-dideoxy-alpha-D-glucose + NADPH + H(+). Its pathway is nucleotide-sugar biosynthesis; CDP-3,6-dideoxy-D-mannose biosynthesis; CDP-3,6-dideoxy-D-mannose from CTP and alpha-D-glucose 1-phosphate: step 4/5. Catalyzes synthesis of paratose and tyvelose, unusual 3,6-dideoxyhexose sugars that form part of the O-antigen in the lipopolysaccharides of several enteric bacteria. The protein is CDP-paratose synthase (rfbS) of Salmonella typhi.